The primary structure comprises 902 residues: Translation initiation factor IF-2 (902 aa).

Residues asparagine 137 to glutamate 177 are compositionally biased toward basic and acidic residues. 2 disordered regions span residues asparagine 137–methionine 248 and histidine 266–threonine 314. Low complexity-rich tracts occupy residues glutamate 178–alanine 229 and arginine 279–serine 291. Residues serine 401–lysine 570 enclose the tr-type G domain. A G1 region spans residues glycine 410–threonine 417. GTP is bound at residue glycine 410 to threonine 417. The tract at residues glycine 435–histidine 439 is G2. Residues aspartate 456–glycine 459 form a G3 region. GTP is bound by residues aspartate 456–histidine 460 and asparagine 510–aspartate 513. The G4 stretch occupies residues asparagine 510–aspartate 513. The interval serine 546–lysine 548 is G5.

Belongs to the TRAFAC class translation factor GTPase superfamily. Classic translation factor GTPase family. IF-2 subfamily.

The protein resides in the cytoplasm. Its function is as follows. One of the essential components for the initiation of protein synthesis. Protects formylmethionyl-tRNA from spontaneous hydrolysis and promotes its binding to the 30S ribosomal subunits. Also involved in the hydrolysis of GTP during the formation of the 70S ribosomal complex. The chain is Translation initiation factor IF-2 from Xanthomonas campestris pv. campestris (strain 8004).